We begin with the raw amino-acid sequence, 500 residues long: Alpha-L-arabinofuranosidase (500 aa).

A signal peptide spans 1–21 (MLSNARIIAAGCIAAGSLVAA). Asn467 is a glycosylation site (N-linked (GlcNAc...) asparagine).

This sequence belongs to the glycosyl hydrolase 54 family.

It carries out the reaction Hydrolysis of terminal non-reducing alpha-L-arabinofuranoside residues in alpha-L-arabinosides.. It participates in glycan metabolism; L-arabinan degradation. This Hypocrea jecorina (Trichoderma reesei) protein is Alpha-L-arabinofuranosidase (abf1).